An 84-amino-acid chain; its full sequence is M-zodatoxin-Lt2b (84 aa).

An N-terminal signal peptide occupies residues methionine 1–alanine 22. The propeptide occupies tyrosine 23–arginine 58. The Processing quadruplet motif motif lies at glutamate 55 to arginine 58.

In terms of processing, cleavage of the propeptide depends on the processing quadruplet motif (XXXR, with at least one of X being E). Expressed by the venom gland.

It localises to the secreted. Has antimicrobial activity against both Gram-positive and Gram-negative bacteria, and yeasts. Also has a strong hemolytic activity against rabbit erythrocytes. Causes paralysis, but is not lethal when injected into insect (M.domestica) larvae. The chain is M-zodatoxin-Lt2b from Lachesana tarabaevi (Spider).